A 230-amino-acid chain; its full sequence is MADS-box transcription factor 50 (230 aa).

One can recognise an MADS-box domain in the interval 1-61 (MVRGKTQMKR…GKLYEFASAS (61 aa)). Residues 86 to 176 (IEQVKADADG…REKCKNQPPL (91 aa)) enclose the K-box domain. The segment at 209 to 230 (GLPGRSRSSGGAAEDSQAMPHS) is disordered.

In terms of tissue distribution, expressed in mature leaves and at low levels in roots and young panicles.

The protein localises to the nucleus. Functionally, probable transcription factor active in flowering time control. May control internode elongation and promote floral transition phase. May act upstream of the floral regulators MADS1, MADS14, MADS15 and MADS18 in the floral induction pathway. The protein is MADS-box transcription factor 50 (MADS50) of Oryza sativa subsp. japonica (Rice).